The sequence spans 369 residues: Molybdenum import ATP-binding protein ModC (369 aa).

Positions 7-243 (PGQAGIHARF…LDLPMAMTDD (237 aa)) constitute an ABC transporter domain. 41–48 (GQSGSGKT) contributes to the ATP binding site. Residues 304–369 (EGSILNVLAV…AQIKAVSLLA (66 aa)) enclose the Mop domain.

The protein belongs to the ABC transporter superfamily. Molybdate importer (TC 3.A.1.8) family. The complex is composed of two ATP-binding proteins (ModC), two transmembrane proteins (ModB) and a solute-binding protein (ModA).

The protein resides in the cell inner membrane. The enzyme catalyses molybdate(out) + ATP + H2O = molybdate(in) + ADP + phosphate + H(+). In terms of biological role, part of the ABC transporter complex ModABC involved in molybdenum import. Responsible for energy coupling to the transport system. This chain is Molybdenum import ATP-binding protein ModC, found in Bordetella pertussis (strain Tohama I / ATCC BAA-589 / NCTC 13251).